Consider the following 594-residue polypeptide: Membrane protein insertase YidC (594 aa).

A helical transmembrane segment spans residues 7–27 (YFVAIALSVLILIAWQFFYVS). The tract at residues 36–73 (AAEQAQQAQQTQQQPGAQPAAPGQALPGGAIPSAGESR) is disordered. Residues 37–65 (AEQAQQAQQTQQQPGAQPAAPGQALPGGA) are compositionally biased toward low complexity. A run of 4 helical transmembrane segments spans residues 369 to 389 (LFGNFGIAILITTIVVKLIFF), 443 to 463 (WPILIQIPVFFALYKVIYVTI), 488 to 508 (LFGLLPFEGPAFLHLGIWPII), and 532 to 552 (FTWMPVVFTFMLASFPAGLVI).

This sequence belongs to the OXA1/ALB3/YidC family. Type 1 subfamily. Interacts with the Sec translocase complex via SecD. Specifically interacts with transmembrane segments of nascent integral membrane proteins during membrane integration.

Its subcellular location is the cell inner membrane. Its function is as follows. Required for the insertion and/or proper folding and/or complex formation of integral membrane proteins into the membrane. Involved in integration of membrane proteins that insert both dependently and independently of the Sec translocase complex, as well as at least some lipoproteins. Aids folding of multispanning membrane proteins. This chain is Membrane protein insertase YidC, found in Rhizobium meliloti (strain 1021) (Ensifer meliloti).